A 20-amino-acid polypeptide reads, in one-letter code: Cytochrome c oxidase subunit 6A1, mitochondrial (20 aa).

The protein belongs to the cytochrome c oxidase subunit 6A family. Component of the cytochrome c oxidase (complex IV, CIV), a multisubunit enzyme composed of 14 subunits. The complex is composed of a catalytic core of 3 subunits MT-CO1, MT-CO2 and MT-CO3, encoded in the mitochondrial DNA, and 11 supernumerary subunits COX4I, COX5A, COX5B, COX6A, COX6B, COX6C, COX7A, COX7B, COX7C, COX8 and NDUFA4, which are encoded in the nuclear genome. The complex exists as a monomer or a dimer and forms supercomplexes (SCs) in the inner mitochondrial membrane with NADH-ubiquinone oxidoreductase (complex I, CI) and ubiquinol-cytochrome c oxidoreductase (cytochrome b-c1 complex, complex III, CIII), resulting in different assemblies (supercomplex SCI(1)III(2)IV(1) and megacomplex MCI(2)III(2)IV(2)). In terms of tissue distribution, liver specific isoform.

The protein localises to the mitochondrion inner membrane. It participates in energy metabolism; oxidative phosphorylation. Component of the cytochrome c oxidase, the last enzyme in the mitochondrial electron transport chain which drives oxidative phosphorylation. The respiratory chain contains 3 multisubunit complexes succinate dehydrogenase (complex II, CII), ubiquinol-cytochrome c oxidoreductase (cytochrome b-c1 complex, complex III, CIII) and cytochrome c oxidase (complex IV, CIV), that cooperate to transfer electrons derived from NADH and succinate to molecular oxygen, creating an electrochemical gradient over the inner membrane that drives transmembrane transport and the ATP synthase. Cytochrome c oxidase is the component of the respiratory chain that catalyzes the reduction of oxygen to water. Electrons originating from reduced cytochrome c in the intermembrane space (IMS) are transferred via the dinuclear copper A center (CU(A)) of subunit 2 and heme A of subunit 1 to the active site in subunit 1, a binuclear center (BNC) formed by heme A3 and copper B (CU(B)). The BNC reduces molecular oxygen to 2 water molecules unsing 4 electrons from cytochrome c in the IMS and 4 protons from the mitochondrial matrix. The polypeptide is Cytochrome c oxidase subunit 6A1, mitochondrial (COX6A1) (Ovis aries (Sheep)).